The primary structure comprises 30 residues: Protein Tat (30 aa).

Positions 1–30 are disordered; sequence PLPTTRGNPTGPKESKKEVESKTETDPFAW. A Cell attachment site motif is present at residues 6–8; that stretch reads RGN. Residues 13 to 30 show a composition bias toward basic and acidic residues; the sequence is KESKKEVESKTETDPFAW.

It belongs to the lentiviruses Tat family. In terms of assembly, interacts with host CCNT1. Associates with the P-TEFb complex composed at least of Tat, P-TEFb (CDK9 and CCNT1), TAR RNA, RNA Pol II. Recruits the HATs CREBBP, TAF1/TFIID, EP300, PCAF and GCN5L2. Interacts with host KAT5/Tip60; this interaction targets the latter to degradation. Interacts with the host deacetylase SIRT1. Interacts with host capping enzyme RNGTT; this interaction stimulates RNGTT. Binds to host KDR, and to the host integrins ITGAV/ITGB3 and ITGA5/ITGB1. Interacts with host KPNB1/importin beta-1 without previous binding to KPNA1/importin alpha-1. Interacts with EIF2AK2. Interacts with host nucleosome assembly protein NAP1L1; this interaction may be required for the transport of Tat within the nucleus, since the two proteins interact at the nuclear rim. Interacts with host C1QBP/SF2P32; this interaction involves lysine-acetylated Tat. Interacts with the host chemokine receptors CCR2, CCR3 and CXCR4. Interacts with host DPP4/CD26; this interaction may trigger an anti-proliferative effect. Interacts with host LDLR. Interacts with the host extracellular matrix metalloproteinase MMP1. Interacts with host PRMT6; this interaction mediates Tat's methylation. Interacts with, and is ubiquitinated by MDM2/Hdm2. Interacts with host PSMC3 and HTATIP2. Interacts with STAB1; this interaction may overcome SATB1-mediated repression of IL2 and IL2RA (interleukin) in T cells by binding to the same domain than HDAC1. Interacts (when acetylated on Lys-50 and Lys-51) with human CDK13, thereby increasing HIV-1 mRNA splicing and promoting the production of the doubly spliced HIV-1 protein Nef. In terms of processing, acetylation by EP300, CREBBP, GCN5L2/GCN5 and PCAF regulates the transactivation activity of Tat. EP300-mediated acetylation of Lys-50 promotes dissociation of Tat from the TAR RNA through the competitive binding to PCAF's bromodomain. In addition, the non-acetylated Tat's N-terminus can also interact with PCAF. PCAF-mediated acetylation of Lys-28 enhances Tat's binding to CCNT1. Lys-50 is deacetylated by SIRT1. Post-translationally, phosphorylated by EIF2AK2 on serine and threonine residues adjacent to the basic region important for TAR RNA binding and function. Phosphorylation of Tat by EIF2AK2 is dependent on the prior activation of EIF2AK2 by dsRNA. Asymmetrical arginine methylation by host PRMT6 seems to diminish the transactivation capacity of Tat and affects the interaction with host CCNT1. In terms of processing, polyubiquitination by MDM2 does not target Tat to degradation, but activates its transactivation function and fosters interaction with CCNT1 and TAR RNA.

It localises to the host nucleus. Its subcellular location is the host nucleolus. The protein resides in the host cytoplasm. The protein localises to the secreted. Its function is as follows. Transcriptional activator that increases RNA Pol II processivity, thereby increasing the level of full-length viral transcripts. Recognizes a hairpin structure at the 5'-LTR of the nascent viral mRNAs referred to as the transactivation responsive RNA element (TAR) and recruits the cyclin T1-CDK9 complex (P-TEFb complex) that will in turn hyperphosphorylate the RNA polymerase II to allow efficient elongation. The CDK9 component of P-TEFb and other Tat-activated kinases hyperphosphorylate the C-terminus of RNA Pol II that becomes stabilized and much more processive. Other factors such as HTATSF1/Tat-SF1, SUPT5H/SPT5, and HTATIP2 are also important for Tat's function. Besides its effect on RNA Pol II processivity, Tat induces chromatin remodeling of proviral genes by recruiting the histone acetyltransferases (HATs) CREBBP, EP300 and PCAF to the chromatin. This also contributes to the increase in proviral transcription rate, especially when the provirus integrates in transcriptionally silent region of the host genome. To ensure maximal activation of the LTR, Tat mediates nuclear translocation of NF-kappa-B by interacting with host RELA. Through its interaction with host TBP, Tat may also modulate transcription initiation. Tat can reactivate a latently infected cell by penetrating in it and transactivating its LTR promoter. In the cytoplasm, Tat is thought to act as a translational activator of HIV-1 mRNAs. In terms of biological role, extracellular circulating Tat can be endocytosed by surrounding uninfected cells via the binding to several surface receptors such as CD26, CXCR4, heparan sulfate proteoglycans (HSPG) or LDLR. Neurons are rarely infected, but they internalize Tat via their LDLR. Endosomal low pH allows Tat to cross the endosome membrane to enter the cytosol and eventually further translocate into the nucleus, thereby inducing severe cell dysfunctions ranging from cell activation to cell death. Through its interaction with nuclear HATs, Tat is potentially able to control the acetylation-dependent cellular gene expression. Tat seems to inhibit the HAT activity of KAT5/Tip60 and TAF1, and consequently modify the expression of specific cellular genes. Modulates the expression of many cellular genes involved in cell survival, proliferation or in coding for cytokines (such as IL10) or cytokine receptors. May be involved in the derepression of host interleukin IL2 expression. Mediates the activation of cyclin-dependent kinases and dysregulation of microtubule network. Tat plays a role in T-cell and neurons apoptosis. Tat induced neurotoxicity and apoptosis probably contribute to neuroAIDS. Host extracellular matrix metalloproteinase MMP1 cleaves Tat and decreases Tat's mediated neurotoxicity. Circulating Tat also acts as a chemokine-like and/or growth factor-like molecule that binds to specific receptors on the surface of the cells, affecting many cellular pathways. In the vascular system, Tat binds to ITGAV/ITGB3 and ITGA5/ITGB1 integrins dimers at the surface of endothelial cells and competes with bFGF for heparin-binding sites, leading to an excess of soluble bFGF. Binds to KDR/VEGFR-2. All these Tat-mediated effects enhance angiogenesis in Kaposi's sarcoma lesions. The protein is Protein Tat of Human immunodeficiency virus type 1 group M subtype A (isolate Z321) (HIV-1).